We begin with the raw amino-acid sequence, 945 residues long: Isoleucine--tRNA ligase (945 aa).

The 'HIGH' region signature appears at 66–76 (PYANGDIHLGH). E581 contacts L-isoleucyl-5'-AMP. A 'KMSKS' region motif is present at residues 622-626 (KMSKS). Residue K625 coordinates ATP. Residues C908, C911, C928, and C931 each contribute to the Zn(2+) site.

This sequence belongs to the class-I aminoacyl-tRNA synthetase family. IleS type 1 subfamily. In terms of assembly, monomer. Zn(2+) is required as a cofactor.

It is found in the cytoplasm. It catalyses the reaction tRNA(Ile) + L-isoleucine + ATP = L-isoleucyl-tRNA(Ile) + AMP + diphosphate. In terms of biological role, catalyzes the attachment of isoleucine to tRNA(Ile). As IleRS can inadvertently accommodate and process structurally similar amino acids such as valine, to avoid such errors it has two additional distinct tRNA(Ile)-dependent editing activities. One activity is designated as 'pretransfer' editing and involves the hydrolysis of activated Val-AMP. The other activity is designated 'posttransfer' editing and involves deacylation of mischarged Val-tRNA(Ile). This Burkholderia orbicola (strain MC0-3) protein is Isoleucine--tRNA ligase.